A 396-amino-acid polypeptide reads, in one-letter code: 2-(3-amino-3-carboxypropyl)histidine synthase subunit 1 (396 aa).

The [4Fe-4S] cluster site is built by Cys89, Cys194, and Cys323. The disordered stretch occupies residues 372–396 (TNNNEANRPKREKRKPHIVVRTEAS).

This sequence belongs to the DPH1/DPH2 family. DPH1 subfamily. In terms of assembly, component of the 2-(3-amino-3-carboxypropyl)histidine synthase complex composed of dph-1, dph-2, dph-3 and a NADH-dependent reductase. It depends on [4Fe-4S] cluster as a cofactor.

It carries out the reaction L-histidyl-[translation elongation factor 2] + S-adenosyl-L-methionine = 2-[(3S)-amino-3-carboxypropyl]-L-histidyl-[translation elongation factor 2] + S-methyl-5'-thioadenosine + H(+). It functions in the pathway protein modification; peptidyl-diphthamide biosynthesis. Functionally, catalyzes the first step of diphthamide biosynthesis, a post-translational modification of histidine which occurs in elongation factor 2. Dph-1 and dph-2 transfer a 3-amino-3-carboxypropyl (ACP) group from S-adenosyl-L-methionine (SAM) to a histidine residue, the reaction is assisted by a reduction system comprising dph-3 and a NADH-dependent reductase. This Caenorhabditis elegans protein is 2-(3-amino-3-carboxypropyl)histidine synthase subunit 1 (dph-1).